Reading from the N-terminus, the 242-residue chain is Ribonuclease 3 (242 aa).

The region spanning 12–139 (ANELLEALGT…LIGATFLEHG (128 aa)) is the RNase III domain. Glu-51 contributes to the Mg(2+) binding site. The active site involves Asp-55. Mg(2+) contacts are provided by Asp-125 and Glu-128. The active site involves Glu-128. In terms of domain architecture, DRBM spans 165 to 236 (LDWKTSLTVK…AEAGWKSLDS (72 aa)).

Belongs to the ribonuclease III family. In terms of assembly, homodimer. Mg(2+) is required as a cofactor.

The protein localises to the cytoplasm. The catalysed reaction is Endonucleolytic cleavage to 5'-phosphomonoester.. Digests double-stranded RNA. Involved in the processing of primary rRNA transcript to yield the immediate precursors to the large and small rRNAs (23S and 16S). Processes some mRNAs, and tRNAs when they are encoded in the rRNA operon. Processes pre-crRNA and tracrRNA of type II CRISPR loci if present in the organism. This Bifidobacterium longum (strain NCC 2705) protein is Ribonuclease 3.